A 383-amino-acid chain; its full sequence is Probable L-tyrosine/L-aspartate decarboxylase (383 aa).

Residue lysine 227 is modified to N6-(pyridoxal phosphate)lysine.

This sequence belongs to the group II decarboxylase family. MfnA subfamily. Requires pyridoxal 5'-phosphate as cofactor.

The catalysed reaction is L-tyrosine + H(+) = tyramine + CO2. It catalyses the reaction L-aspartate + H(+) = beta-alanine + CO2. It participates in cofactor biosynthesis; methanofuran biosynthesis. Its pathway is cofactor biosynthesis; coenzyme A biosynthesis. Functionally, catalyzes the decarboxylation of L-tyrosine to produce tyramine for methanofuran biosynthesis. Can also catalyze the decarboxylation of L-aspartate to produce beta-alanine for coenzyme A (CoA) biosynthesis. This Methanothrix thermoacetophila (strain DSM 6194 / JCM 14653 / NBRC 101360 / PT) (Methanosaeta thermophila) protein is Probable L-tyrosine/L-aspartate decarboxylase.